A 278-amino-acid polypeptide reads, in one-letter code: Extracellular metalloprotease MCYG_03238 (278 aa).

The first 19 residues, 1 to 19, serve as a signal peptide directing secretion; that stretch reads MRFSIVLSSIAALSSVAAA. Asparagine 52 carries an N-linked (GlcNAc...) asparagine glycan. Histidine 170 lines the Zn(2+) pocket. The active site involves glutamate 171. A Zn(2+)-binding site is contributed by histidine 174. Cysteine 209 and cysteine 255 are oxidised to a cystine.

It belongs to the peptidase M43B family.

The protein resides in the secreted. Functionally, secreted metalloproteinase that allows assimilation of proteinaceous substrates. Plays a pivotal role as a pathogenicity determinant during infections and contributes to the ability of the pathogen to persist within the mammalian host. The sequence is that of Extracellular metalloprotease MCYG_03238 from Arthroderma otae (strain ATCC MYA-4605 / CBS 113480) (Microsporum canis).